Reading from the N-terminus, the 20-residue chain is Flagellar filament 33 kDa core protein (20 aa).

Belongs to the bacterial flagellin family. In terms of assembly, the flagellum consists of an outer layer composed of repeating units of FlaA around a core that contains one or all of five antigenically related polypeptides.

The protein resides in the periplasmic flagellum. The protein localises to the periplasm. Functionally, component of the core of the flagella. The sequence is that of Flagellar filament 33 kDa core protein from Spirochaeta aurantia.